Consider the following 72-residue polypeptide: Translation initiation factor IF-1 (72 aa).

The S1-like domain occupies 1-72; that stretch reads MSKEDVIELE…TRGRIVWRSK (72 aa).

This sequence belongs to the IF-1 family. As to quaternary structure, component of the 30S ribosomal translation pre-initiation complex which assembles on the 30S ribosome in the order IF-2 and IF-3, IF-1 and N-formylmethionyl-tRNA(fMet); mRNA recruitment can occur at any time during PIC assembly.

It localises to the cytoplasm. In terms of biological role, one of the essential components for the initiation of protein synthesis. Stabilizes the binding of IF-2 and IF-3 on the 30S subunit to which N-formylmethionyl-tRNA(fMet) subsequently binds. Helps modulate mRNA selection, yielding the 30S pre-initiation complex (PIC). Upon addition of the 50S ribosomal subunit IF-1, IF-2 and IF-3 are released leaving the mature 70S translation initiation complex. The sequence is that of Translation initiation factor IF-1 from Caldicellulosiruptor saccharolyticus (strain ATCC 43494 / DSM 8903 / Tp8T 6331).